Consider the following 418-residue polypeptide: AP-1 complex subunit mu (418 aa).

Residues asparagine 176–arginine 417 form the MHD domain.

This sequence belongs to the adaptor complexes medium subunit family. Adaptor protein complex 1 (AP-1) is a heterotetramer composed of two large adaptins (gamma- and beta'-type subunits), a medium adaptin (mu-type subunit AP47) and a small adaptin (sigma-type subunit AP19). Regulated by phosphorylation.

It is found in the golgi apparatus. Its subcellular location is the cytoplasmic vesicle. The protein resides in the clathrin-coated vesicle membrane. In terms of biological role, component of the adapter complexes which link clathrin to receptors in coated vesicles. Clathrin-associated protein complexes are believed to interact with the cytoplasmic tails of membrane proteins, leading to their selection and concentration. AP47 is a subunit of the plasma membrane adapter. The protein is AP-1 complex subunit mu of Diplobatis ommata (Ocellated electric ray).